The following is a 450-amino-acid chain: Regulator of sigma-E protease RseP (450 aa).

A helical transmembrane segment spans residues 1 to 21 (MLSFLWDLASFIVALGVLITV). His22 is a binding site for Zn(2+). Over 22 to 103 (HEFGHFWVAR…VGQRAAIIAA (82 aa)) the chain is Periplasmic. Glu23 is a catalytic residue. Residue His26 coordinates Zn(2+). A helical transmembrane segment spans residues 104–124 (GPVANFIFAIFAYWLVFIIGV). Residues 125–375 (PGVRPVVGEI…KGAGMTAELG (251 aa)) are Cytoplasmic-facing. PDZ domains are found at residues 127-220 (VRPV…PRGP) and 222-309 (IEPV…PKVI). A helical transmembrane segment spans residues 376 to 396 (VVYYLPFLALISVNLGIINLF). At 397–429 (PLPVLDGGHLLFLAIEKIKGGPVSERVQDFCYR) the chain is on the periplasmic side. Residues 430 to 450 (IGSILLVLLMGLALFNDFSRL) form a helical membrane-spanning segment.

It belongs to the peptidase M50B family. In terms of assembly, interacts with RseA; the third transmembrane domain can be cross-linked to the transmembrane domain of RseA. The cofactor is Zn(2+).

It localises to the cell inner membrane. Its activity is regulated as follows. Inhibited by Zn(2+) chelator 1,10-phenanthroline. Its function is as follows. A site-2 regulated intramembrane protease (S2P) that cleaves the peptide bond between 'Ala-108' and 'Cys-109' in the transmembrane region of RseA. Part of a regulated intramembrane proteolysis (RIP) cascade. Acts on DegS-cleaved RseA to release the cytoplasmic domain of RseA, residue 'Val-148' of RseA may be required for this. This provides the cell with sigma-E (RpoE) activity through the proteolysis of RseA. Can also cleave sequences in transmembrane regions of other proteins (such as LacY) as well as liberated signal peptides of beta-lactamase, OmpF, LivK, SecM, PhoA, LivJ, OmpC, Lpp and TorA, probably within the membrane. Cleaves FecR within its transmembrane region to release an N-terminal cytoplasmic fragment which binds to sigma factor FecI, allowing it to activate transcription of the fecABCDE operon which mediates ferric citrate transport. This Escherichia coli (strain K12) protein is Regulator of sigma-E protease RseP (rseP).